The following is a 422-amino-acid chain: AP-1 complex subunit mu-1-I (422 aa).

In terms of domain architecture, MHD spans 167 to 420 (KNEVFLDVIE…ITQNGEYEMR (254 aa)).

The protein belongs to the adaptor complexes medium subunit family. In terms of assembly, adaptor protein complex 1 (AP-1) is a heterotetramer composed of two large adaptins (gamma- and beta'-type subunits), a medium adaptin (mu-type subunit AP47) and a small adaptin (sigma-type subunit AP19). Interacts (via N-terminus) with kvs-4. As to expression, expressed in the cholinergic motor neuron DA9.

Its subcellular location is the golgi apparatus. It localises to the cytoplasmic vesicle. The protein resides in the clathrin-coated vesicle membrane. It is found in the cell projection. The protein localises to the dendrite. Functionally, component of the adaptor complexes which link clathrin to receptors in coated vesicles. Clathrin-associated protein complexes are believed to interact with the cytoplasmic tails of membrane proteins, leading to their selection and concentration. Required for many aspects of development and behavior, including negative regulation of vulval differentiation. Required for the dendritic localization of potassium channel kvs-4 in the cholinergic motor neuron DA9. The chain is AP-1 complex subunit mu-1-I (unc-101) from Caenorhabditis elegans.